A 222-amino-acid chain; its full sequence is 7-cyano-7-deazaguanine synthase (222 aa).

I9 to A19 serves as a coordination point for ATP. Residues C188, C196, C199, and C202 each coordinate Zn(2+).

Belongs to the QueC family. Zn(2+) serves as cofactor.

It carries out the reaction 7-carboxy-7-deazaguanine + NH4(+) + ATP = 7-cyano-7-deazaguanine + ADP + phosphate + H2O + H(+). It participates in purine metabolism; 7-cyano-7-deazaguanine biosynthesis. In terms of biological role, catalyzes the ATP-dependent conversion of 7-carboxy-7-deazaguanine (CDG) to 7-cyano-7-deazaguanine (preQ(0)). The sequence is that of 7-cyano-7-deazaguanine synthase from Sulfurovum sp. (strain NBC37-1).